A 798-amino-acid polypeptide reads, in one-letter code: Nucleolin homolog 1 (798 aa).

Residues 1 to 548 (MGFDSPRGRG…IISEEERRRQ (548 aa)) are disordered. Residues 8-34 (GRGGGGFRGGRGGGSGFTPRGGGGGFR) show a composition bias toward gly residues. 3 stretches are compositionally biased toward basic and acidic residues: residues 59-75 (GGDR…DREG), 88-98 (GGDRGGFRGGD), and 106-116 (GGDRGNFRGGD). Gly residues-rich tracts occupy residues 150–164 (RGGG…GRGG) and 171–184 (GGRG…GGSR). Composition is skewed to acidic residues over residues 196–205 (SDGDDDEEEE), 226–242 (DDSG…DEEP), 258–278 (EDSD…DDDA), and 287–317 (VEED…EETE). Polar residues predominate over residues 328–350 (SLKSVDSTKGKQVNLSKVATPTT). Acidic residues-rich tracts occupy residues 378–404 (DDDS…EEED) and 424–450 (IEED…EEDT). Residues 467-476 (AANRAAASAA) are compositionally biased toward low complexity. The span at 478–504 (DSDEDEDEEDEEDVEEEDEEEEEEEDI) shows a compositional bias: acidic residues. Residues 532–548 (VKSDGKSIISEEERRRQ) show a composition bias toward basic and acidic residues. The 76-residue stretch at 638-713 (LQLFINALPG…HLVDVFYARH (76 aa)) folds into the RRM domain. The interval 736 to 798 (PKVAADSSGD…FKKTGFKGKK (63 aa)) is disordered. Positions 743 to 762 (SGDDSEEVASSDEGIQEVEE) are enriched in acidic residues. The segment covering 783–798 (QQKKPQFKKTGFKGKK) has biased composition (basic residues).

As to quaternary structure, identified in an mRNP granule complex containing untranslated mRNAs.

It is found in the nucleus. The protein localises to the nucleolus. Its function is as follows. Nucleolin is the major nucleolar protein of growing eukaryotic cells. It is found associated with intranucleolar chromatin and pre-ribosomal particles. It induces chromatin decondensation by binding to histone H1. It is thought to play a role in pre-rRNA transcription and ribosome assembly. May play a role in the process of transcriptional elongation. Involved in phase separation into sub-nucleolar condensates. This Caenorhabditis elegans protein is Nucleolin homolog 1.